A 709-amino-acid chain; its full sequence is Polyribonucleotide nucleotidyltransferase (709 aa).

2 residues coordinate Mg(2+): Asp-489 and Asp-495. A KH domain is found at 556 to 615 (PKIDMIKIDVDKIKVVIGKGGETIDKIIAETGVKIDIDEEGNVSIFSSDQAAIDRTKDII). Positions 625–693 (GEVYHAKVVR…DKGRVDASMK (69 aa)) constitute an S1 motif domain.

It belongs to the polyribonucleotide nucleotidyltransferase family. Mg(2+) is required as a cofactor.

It is found in the cytoplasm. The enzyme catalyses RNA(n+1) + phosphate = RNA(n) + a ribonucleoside 5'-diphosphate. Its function is as follows. Involved in mRNA degradation. Catalyzes the phosphorolysis of single-stranded polyribonucleotides processively in the 3'- to 5'-direction. This Streptococcus agalactiae serotype Ia (strain ATCC 27591 / A909 / CDC SS700) protein is Polyribonucleotide nucleotidyltransferase.